Reading from the N-terminus, the 155-residue chain is 2-C-methyl-D-erythritol 2,4-cyclodiphosphate synthase (155 aa).

2 residues coordinate a divalent metal cation: D8 and H10. Residues 8–10 (DVH) and 34–35 (HS) contribute to the 4-CDP-2-C-methyl-D-erythritol 2-phosphate site. H42 is a binding site for a divalent metal cation. 4-CDP-2-C-methyl-D-erythritol 2-phosphate is bound by residues 56–58 (DIG), 61–65 (FPDSD), 100–106 (AQKPKML), 132–135 (TTEE), F139, and K142.

The protein belongs to the IspF family. In terms of assembly, homotrimer. Requires a divalent metal cation as cofactor.

It catalyses the reaction 4-CDP-2-C-methyl-D-erythritol 2-phosphate = 2-C-methyl-D-erythritol 2,4-cyclic diphosphate + CMP. It functions in the pathway isoprenoid biosynthesis; isopentenyl diphosphate biosynthesis via DXP pathway; isopentenyl diphosphate from 1-deoxy-D-xylulose 5-phosphate: step 4/6. In terms of biological role, involved in the biosynthesis of isopentenyl diphosphate (IPP) and dimethylallyl diphosphate (DMAPP), two major building blocks of isoprenoid compounds. Catalyzes the conversion of 4-diphosphocytidyl-2-C-methyl-D-erythritol 2-phosphate (CDP-ME2P) to 2-C-methyl-D-erythritol 2,4-cyclodiphosphate (ME-CPP) with a corresponding release of cytidine 5-monophosphate (CMP). The polypeptide is 2-C-methyl-D-erythritol 2,4-cyclodiphosphate synthase (Clostridium botulinum (strain Kyoto / Type A2)).